A 417-amino-acid chain; its full sequence is D-amino acid dehydrogenase (417 aa).

An FAD-binding site is contributed by 3-17 (VIVLGSGVIGVTAAW).

This sequence belongs to the DadA oxidoreductase family. It depends on FAD as a cofactor.

The catalysed reaction is a D-alpha-amino acid + A + H2O = a 2-oxocarboxylate + AH2 + NH4(+). The protein operates within amino-acid degradation; D-alanine degradation; NH(3) and pyruvate from D-alanine: step 1/1. In terms of biological role, oxidative deamination of D-amino acids. The protein is D-amino acid dehydrogenase of Methylobacillus flagellatus (strain ATCC 51484 / DSM 6875 / VKM B-1610 / KT).